Here is a 289-residue protein sequence, read N- to C-terminus: ATP synthase gamma chain (289 aa).

Belongs to the ATPase gamma chain family. As to quaternary structure, F-type ATPases have 2 components, CF(1) - the catalytic core - and CF(0) - the membrane proton channel. CF(1) has five subunits: alpha(3), beta(3), gamma(1), delta(1), epsilon(1). CF(0) has three main subunits: a, b and c.

The protein resides in the cell membrane. Produces ATP from ADP in the presence of a proton gradient across the membrane. The gamma chain is believed to be important in regulating ATPase activity and the flow of protons through the CF(0) complex. The protein is ATP synthase gamma chain of Lactococcus lactis subsp. cremoris (strain MG1363).